Reading from the N-terminus, the 132-residue chain is Nitrogenase iron-iron protein delta chain (132 aa).

Hexamer of two alpha, two beta, and two delta chains. Requires iron-sulfur cluster as cofactor.

The catalysed reaction is N2 + 8 reduced [2Fe-2S]-[ferredoxin] + 16 ATP + 16 H2O = H2 + 8 oxidized [2Fe-2S]-[ferredoxin] + 2 NH4(+) + 16 ADP + 16 phosphate + 6 H(+). Functionally, the key enzymatic reactions in nitrogen fixation are catalyzed by the nitrogenase complex, which has 2 components: the iron protein (component 2) and a component 1 which is either a molybdenum-iron protein, a vanadium-iron, or an iron-iron protein. The chain is Nitrogenase iron-iron protein delta chain (anfG) from Ruminiclostridium hungatei (Clostridium hungatei).